Consider the following 305-residue polypeptide: MSLLDWFANRRKTEPVVHDYQEREIADGLWTKCESCDALTYTKDLQANLMVCLQCGHHLRIYSDERIRQLIDPGTWQFLDEAVSPTDPLGFRDRKSYSDRLKETQANTGLSDAVRTGVGLLEGQPVALGVMDFRFMGGSMGSVVGEKLTRLIEKGTEQRSPVIIVCASGGARMQEGMLSLMQMAKISGALERHREAGLLYLPILTHPTTGGVTASFAMLGDLIIAEPKALIGFAGRRVIEQTLREKLPDDFQTAEYLQAHGFVDTIVPRTQLKKTLAQLIRLHQPQSPEMKLPLLESSSPATAPL.

The CoA carboxyltransferase N-terminal domain occupies 29–298; the sequence is LWTKCESCDA…EMKLPLLESS (270 aa). The Zn(2+) site is built by Cys-33, Cys-36, Cys-52, and Cys-55. The C4-type zinc-finger motif lies at 33–55; it reads CESCDALTYTKDLQANLMVCLQC.

Belongs to the AccD/PCCB family. As to quaternary structure, acetyl-CoA carboxylase is a heterohexamer composed of biotin carboxyl carrier protein (AccB), biotin carboxylase (AccC) and two subunits each of ACCase subunit alpha (AccA) and ACCase subunit beta (AccD). It depends on Zn(2+) as a cofactor.

Its subcellular location is the cytoplasm. The catalysed reaction is N(6)-carboxybiotinyl-L-lysyl-[protein] + acetyl-CoA = N(6)-biotinyl-L-lysyl-[protein] + malonyl-CoA. The protein operates within lipid metabolism; malonyl-CoA biosynthesis; malonyl-CoA from acetyl-CoA: step 1/1. Its function is as follows. Component of the acetyl coenzyme A carboxylase (ACC) complex. Biotin carboxylase (BC) catalyzes the carboxylation of biotin on its carrier protein (BCCP) and then the CO(2) group is transferred by the transcarboxylase to acetyl-CoA to form malonyl-CoA. The polypeptide is Acetyl-coenzyme A carboxylase carboxyl transferase subunit beta (Synechococcus sp. (strain ATCC 27144 / PCC 6301 / SAUG 1402/1) (Anacystis nidulans)).